The primary structure comprises 500 residues: Gamma-glutamylanilide synthase (500 aa).

One can recognise a GS beta-grasp domain in the interval 32–136 (LGLEMIRLSW…MLADLHWKSG (105 aa)). In terms of domain architecture, GS catalytic spans 143 to 500 (PRGIMKKAVK…WEQKEYFNLL (358 aa)).

It belongs to the glutamine synthetase family. Homohexamer.

It carries out the reaction aniline + L-glutamate + ATP = N(5)-phenyl-L-glutamine + ADP + phosphate. Its function is as follows. Involved in the initial oxidation of aniline to catechol by the release of its amino group. Catalyzes the ATP-dependent ligation of L-glutamate to aniline to yield gamma-glutamylanilide (gamma-GA). AtdA1 has a broad substrate range and is able to convert the following anilines, including chlorinated and methylated forms of aniline: aniline (100%), o-chloroaniline (92%), m-chloroaniline (69%), p-chloroaniline (92%), o-methylaniline (40%), m-methylaniline (27%) and p-methylaniline (45%). The sequence is that of Gamma-glutamylanilide synthase from Acinetobacter sp.